A 338-amino-acid chain; its full sequence is Lipoate-protein ligase A (338 aa).

The BPL/LPL catalytic domain occupies 29-216 (PATQRVLFLW…AFFAHYGERV (188 aa)). ATP-binding positions include Arg71, 76–79 (GAVF), and Lys134. Lys134 provides a ligand contact to (R)-lipoate.

Belongs to the LplA family. In terms of assembly, monomer.

Its subcellular location is the cytoplasm. It carries out the reaction L-lysyl-[lipoyl-carrier protein] + (R)-lipoate + ATP = N(6)-[(R)-lipoyl]-L-lysyl-[lipoyl-carrier protein] + AMP + diphosphate + H(+). It functions in the pathway protein modification; protein lipoylation via exogenous pathway; protein N(6)-(lipoyl)lysine from lipoate: step 1/2. Its pathway is protein modification; protein lipoylation via exogenous pathway; protein N(6)-(lipoyl)lysine from lipoate: step 2/2. Its function is as follows. Catalyzes both the ATP-dependent activation of exogenously supplied lipoate to lipoyl-AMP and the transfer of the activated lipoyl onto the lipoyl domains of lipoate-dependent enzymes. The sequence is that of Lipoate-protein ligase A from Salmonella typhimurium (strain LT2 / SGSC1412 / ATCC 700720).